Here is a 1094-residue protein sequence, read N- to C-terminus: Isoleucine--tRNA ligase (1094 aa).

The short motif at 53–63 is the 'HIGH' region element; that stretch reads PFANGLPHYGH. A 'KMSKS' region motif is present at residues 624–628; that stretch reads KLSKR. An ATP-binding site is contributed by K627.

The protein belongs to the class-I aminoacyl-tRNA synthetase family. IleS type 2 subfamily. As to quaternary structure, monomer. It depends on Zn(2+) as a cofactor.

The protein resides in the cytoplasm. It catalyses the reaction tRNA(Ile) + L-isoleucine + ATP = L-isoleucyl-tRNA(Ile) + AMP + diphosphate. Functionally, catalyzes the attachment of isoleucine to tRNA(Ile). As IleRS can inadvertently accommodate and process structurally similar amino acids such as valine, to avoid such errors it has two additional distinct tRNA(Ile)-dependent editing activities. One activity is designated as 'pretransfer' editing and involves the hydrolysis of activated Val-AMP. The other activity is designated 'posttransfer' editing and involves deacylation of mischarged Val-tRNA(Ile). The sequence is that of Isoleucine--tRNA ligase from Rickettsia felis (strain ATCC VR-1525 / URRWXCal2) (Rickettsia azadi).